The sequence spans 162 residues: Epoxidase pydX (162 aa).

An N-terminal signal peptide occupies residues 1-26 (MSLIALPLRLLRLLPAITSTWVLAFA). Transmembrane regions (helical) follow at residues 62-82 (WILI…LFVG) and 89-109 (TGAM…MGYM). 2 N-linked (GlcNAc...) asparagine glycosylation sites follow: Asn127 and Asn139.

The protein belongs to the epoxidase xenD family.

The protein localises to the membrane. Its pathway is mycotoxin biosynthesis. Its function is as follows. Epoxidase; part of the gene cluster that mediates the biosynthesis of pyrrocidines, fungal natural products containing a macrocyclic para-cyclophane connected to a decahydrofluorene ring system that show potent antibiotic activities toward Gram-negative bacteria. Within the pathway, pydX functions synergistically with pydB, pydE and pydZ to form the cyclophane. The pathway begins with the PKS-NRPS pydA which, with the help of the trans-enoyl reductase pydC, synthesizes the polyketide-tyrosyl acyl thioester product which can be reductively off-loaded by the terminal reductase (R) domain in pydA. The alpha/beta hydrolase pydG is then required to catalyze the subsequent Knoevenagel condensation that affords the 3-pyrrolin-2-one ring, whereas the four proteins pydB, pydE, pydX and pydZ then function synergistically to form the cyclophane. PydB and the membrane-bound pydX and pydZ are lipid-binding proteins that can sequester and mold the pdyG product into the inverse S-shape. Binding of the medium chain reductase pydE to the complex would trigger the cascade oxidative cyclization. PydY is involved in the Diels-Alder cycloaddition that forms the decahydrofluorene core. Additional non-enzymatic hydroxylation yields pyrrocidine A2 which can be further reduced into pyrrocidine B by an endogenous reductase. This Acremonium sp protein is Epoxidase pydX.